The sequence spans 356 residues: Cobalt-precorrin-5B C(1)-methyltransferase (356 aa).

This sequence belongs to the CbiD family.

The enzyme catalyses Co-precorrin-5B + S-adenosyl-L-methionine = Co-precorrin-6A + S-adenosyl-L-homocysteine. The protein operates within cofactor biosynthesis; adenosylcobalamin biosynthesis; cob(II)yrinate a,c-diamide from sirohydrochlorin (anaerobic route): step 6/10. Catalyzes the methylation of C-1 in cobalt-precorrin-5B to form cobalt-precorrin-6A. This Citrifermentans bemidjiense (strain ATCC BAA-1014 / DSM 16622 / JCM 12645 / Bem) (Geobacter bemidjiensis) protein is Cobalt-precorrin-5B C(1)-methyltransferase.